We begin with the raw amino-acid sequence, 782 residues long: MKISSGAINFSTIPNQVKKLITSIREHTKNGLASKITSVKNTHTSLNEKFKTGKDSPIEFALPQKIKDFFQPKDKNTLNKTLITVKNIKDTNNAGKKNISAEDVSKMNAAFMRKHIANQTCDYNYRMTGAAPLPGGVSVSANNRPTVSEGRTPPVSPSLSLQATSSPSSPADWAKKLTDAVLRQKAGETLTAADRDFSNADFRNITFSKILPPSFMERDGDIIKGFNFSNSKFTYSDISHLHFDECRFTYSTLSDVVCSNTKFSNSDMNEVVLQYSITTQQQPSFIDTTLKNTLIRHKANLSGVILNEPDNSSPPSVSGGGNFIRLGDIWLQMPLLWTENAVDGFLNHEHNNGKSILMTIDSLPDKYSQEKVQAMEDLVKSLRGGRLTEACIRPVESSLVSVLAHPPYTQSALIREWLGPVQERFFAHQCQTYNDVPLPTPDTYYQQRILPVLLDSFDRNSAAMTTHSGLFNQVILHCMTGVDCTDGTRQKAAALYEQYLAHPAVSPHIHNGLFGNYDGSSDWTTRAADNFLLLSSQDSDTAMMLSTDTLLTMLNPTPDTAWDNFYLLRAGENVSTAQISPVELFRHDFPVFLAAFNQQATQRRFGELIDIILSTEEHGELNQQFIAATNQKHSTVKLIDDASVSRLATIFAPLLPEGKLSPAHYQHILSAYHLTDATPQKQAETLFCLSTAFARYSSSAIFGTEHDSPPALRGYAEALMQKAWELSPAIFPSSEQFTDWSDRFHGLHGAFTCTSVVADSMQRHARKYFPSVLSSILPLSWA.

The interval 137–171 is disordered; the sequence is VSVSANNRPTVSEGRTPPVSPSLSLQATSSPSSPA. A compositionally biased stretch (low complexity) spans 157–171; that stretch reads PSLSLQATSSPSSPA. Residue C753 is the Glycyl thioester intermediate of the active site.

The protein belongs to the SopA E3 ligase family. Post-translationally, ubiquitinated in the presence of host E1 ubiquitin-activating enzyme, E2 ubiquitin-conjugating enzyme and ubiquitin.

Its subcellular location is the secreted. The protein localises to the host cell. It catalyses the reaction S-ubiquitinyl-[E2 ubiquitin-conjugating enzyme]-L-cysteine + [acceptor protein]-L-lysine = [E2 ubiquitin-conjugating enzyme]-L-cysteine + N(6)-ubiquitinyl-[acceptor protein]-L-lysine.. Functionally, effector proteins function to alter host cell physiology and promote bacterial survival in host tissues. This protein is an E3 ubiquitin ligase that interferes with host's ubiquitination pathway. The chain is E3 ubiquitin-protein ligase SopA (sopA) from Salmonella dublin (strain CT_02021853).